We begin with the raw amino-acid sequence, 307 residues long: Malate dehydrogenase (307 aa).

Residues 8 to 13 (GAGNVG) and Asp32 contribute to the NAD(+) site. The substrate site is built by Arg81 and Arg87. NAD(+)-binding positions include Asn94 and 117 to 119 (VTN). Asn119 and Arg150 together coordinate substrate. His174 serves as the catalytic Proton acceptor.

Belongs to the LDH/MDH superfamily.

It catalyses the reaction (S)-malate + NAD(+) = oxaloacetate + NADH + H(+). Catalyzes the reversible oxidation of malate to oxaloacetate. This chain is Malate dehydrogenase (mdh), found in Methanosarcina barkeri (strain Fusaro / DSM 804).